The following is a 277-amino-acid chain: Putative hydroxypyruvate isomerase (277 aa).

Active-site proton donor/acceptor residues include Glu150 and Glu249.

Belongs to the hyi family.

It carries out the reaction 3-hydroxypyruvate = 2-hydroxy-3-oxopropanoate. Functionally, catalyzes the reversible isomerization between hydroxypyruvate and 2-hydroxy-3-oxopropanoate (also termed tartronate semialdehyde). The sequence is that of Putative hydroxypyruvate isomerase (HYI) from Homo sapiens (Human).